The primary structure comprises 218 residues: uncharacterized protein (218 aa).

This is an uncharacterized protein from Caenorhabditis elegans.